Consider the following 1360-residue polypeptide: Ubiquitin carboxyl-terminal hydrolase 19 (1360 aa).

A disordered region spans residues 1-46 (MSAGASATGPRRGPPGLEEATSKKKQKDRANLESKDGDARRVSLPR). At 1 to 1333 (MSAGASATGP…TTPDEGCLRY (1333 aa)) the chain is on the cytoplasmic side. Residues 28-46 (DRANLESKDGDARRVSLPR) are compositionally biased toward basic and acidic residues. A CS 1 domain is found at 51 to 140 (KDELLLDWRQ…VPLLTWPSLL (90 aa)). The tract at residues 163 to 239 (PIALEPGSEP…APSFLSDSAT (77 aa)) is disordered. Positions 170 to 181 (SEPRRAKQEARN) are enriched in basic and acidic residues. Residues 189–199 (GEVGSGAGPGT) show a composition bias toward gly residues. S220 carries the post-translational modification Phosphoserine. Positions 322–424 (LAFVKNDSYE…RQSQRWGGLE (103 aa)) constitute a CS 2 domain. A disordered region spans residues 432–482 (VGGAKVAVPTGPTPLDSTPPGGGPHPLTGQEEARAVEKEKPKARSEDSGLD). Residues 462–478 (EEARAVEKEKPKARSED) are compositionally biased toward basic and acidic residues. The 718-residue stretch at 539 to 1256 (TGLVNLGNTC…YAYVLFYRRR (718 aa)) folds into the USP domain. Residue C548 is the Nucleophile of the active site. Zn(2+) is bound by residues C833, C836, C850, C853, C859, C863, H871, and C875. An MYND-type zinc finger spans residues 833–875 (CAACQRKQQSEEEKLKRCTRCYRVGYCNQFCQKTHWPDHKGLC). Positions 965–988 (DTGAHRVWPPADRGPVPSTSGLSS) are disordered. The Proton acceptor role is filled by H1207. The segment covering 1259–1274 (PVERPPRASHSEHHPD) has biased composition (basic and acidic residues). Residues 1259–1281 (PVERPPRASHSEHHPDLGPAAEA) are disordered. A helical transmembrane segment spans residues 1334–1354 (FVLGTVAALVALVLNVFYPLV). Residues 1355–1360 (SQSRWR) lie on the Lumenal side of the membrane.

Interacts with RNF123. Interacts with BIRC2/c-IAP1, BIRC3/c-IAP2 and XIAP/BIRC4. Interacts with HIF1A (via N-terminus).

The protein localises to the endoplasmic reticulum membrane. The enzyme catalyses Thiol-dependent hydrolysis of ester, thioester, amide, peptide and isopeptide bonds formed by the C-terminal Gly of ubiquitin (a 76-residue protein attached to proteins as an intracellular targeting signal).. Functionally, deubiquitinating enzyme that regulates the degradation of various proteins by removing ubiquitin moieties, thereby preventing their proteasomal degradation. Stabilizes RNF123, which promotes CDKN1B degradation and contributes to cell proliferation. Decreases the levels of ubiquitinated proteins during skeletal muscle formation and acts to repress myogenesis. Modulates transcription of major myofibrillar proteins. Also involved in turnover of endoplasmic-reticulum-associated degradation (ERAD) substrates. Mechanistically, deubiquitinates and thereby stabilizes several E3 ligases involved in the ERAD pathway including SYVN1 or MARCHF6. Regulates the stability of other E3 ligases including BIRC2/c-IAP1 and BIRC3/c-IAP2 by preventing their ubiquitination. Required for cells to mount an appropriate response to hypoxia by rescuing HIF1A from degradation in a non-catalytic manner and by mediating the deubiquitination of FUNDC1. Attenuates mitochondrial damage and ferroptosis by targeting and stabilizing NADPH oxidase 4/NOX4. Negatively regulates TNF-alpha- and IL-1beta-triggered NF-kappa-B activation by hydrolyzing 'Lys-27'- and 'Lys-63'-linked polyubiquitin chains from MAP3K7. Modulates also the protein level and aggregation of polyQ-expanded huntingtin/HTT through HSP90AA1. The polypeptide is Ubiquitin carboxyl-terminal hydrolase 19 (Usp19) (Mus musculus (Mouse)).